The chain runs to 315 residues: Aspartate carbamoyltransferase catalytic subunit (315 aa).

Carbamoyl phosphate contacts are provided by Arg-64 and Thr-65. Lys-93 is an L-aspartate binding site. Carbamoyl phosphate contacts are provided by Arg-114, His-142, and Gln-145. L-aspartate is bound by residues Arg-175 and Arg-237. 2 residues coordinate carbamoyl phosphate: Leu-276 and Pro-277.

It belongs to the aspartate/ornithine carbamoyltransferase superfamily. ATCase family. Heterooligomer of catalytic and regulatory chains.

The enzyme catalyses carbamoyl phosphate + L-aspartate = N-carbamoyl-L-aspartate + phosphate + H(+). It functions in the pathway pyrimidine metabolism; UMP biosynthesis via de novo pathway; (S)-dihydroorotate from bicarbonate: step 2/3. In terms of biological role, catalyzes the condensation of carbamoyl phosphate and aspartate to form carbamoyl aspartate and inorganic phosphate, the committed step in the de novo pyrimidine nucleotide biosynthesis pathway. The chain is Aspartate carbamoyltransferase catalytic subunit from Thermofilum pendens (strain DSM 2475 / Hrk 5).